The sequence spans 1020 residues: Contactin-1 (1020 aa).

The signal sequence occupies residues 1–20 (MKMPLLVSHLLLISLTSCLG). 6 consecutive Ig-like C2-type domains span residues 41–131 (PIFE…ATLS), 137–223 (PFPP…KSVF), 241–326 (PADI…ARIY), 331–407 (PEWV…AELK), 413–500 (PTFE…GTLV), and 504–603 (PTRI…LVVR). 2 disulfides stabilise this stretch: cysteine 65/cysteine 114 and cysteine 158/cysteine 211. Asparagine 208 and asparagine 258 each carry an N-linked (GlcNAc...) asparagine glycan. The cysteines at positions 263 and 310 are disulfide-linked. A glycan (N-linked (GlcNAc...) asparagine) is linked at asparagine 338. Disulfide bonds link cysteine 352/cysteine 391 and cysteine 436/cysteine 484. N-linked (GlcNAc...) asparagine glycosylation is found at asparagine 457, asparagine 473, asparagine 494, and asparagine 521. Cysteines 526 and 585 form a disulfide. A glycan (N-linked (GlcNAc...) asparagine) is linked at asparagine 593. Fibronectin type-III domains are found at residues 608–706 (PPGG…TDGA), 711–808 (APSD…SAQD), 813–908 (APTE…APPS), and 909–1002 (QPPR…TLSS). The tract at residues 695-719 (SIPSNRIKTDGAAPNVAPSDVGGGG) is disordered. A glycan (N-linked (GlcNAc...) asparagine) is linked at asparagine 935. Residue serine 1001 is the site of GPI-anchor amidated serine attachment. The propeptide at 1002 to 1020 (SSLLSLLLPSLGFLVYSEF) is removed in mature form.

This sequence belongs to the immunoglobulin superfamily. Contactin family. As to quaternary structure, monomer. Interacts with CNTNAP1 in cis form. Binds to the carbonic-anhydrase like domain of PTPRZ1. Interacts with NOTCH1 and TNR. Detected in a complex with NRCAM and PTPRB. Interacts with TASOR. In terms of tissue distribution, expressed in the ovary and in Sertoli cells of the testis.

The protein localises to the cell membrane. Contactins mediate cell surface interactions during nervous system development. Involved in the formation of paranodal axo-glial junctions in myelinated peripheral nerves and in the signaling between axons and myelinating glial cells via its association with CNTNAP1. Participates in oligodendrocytes generation by acting as a ligand of NOTCH1. Its association with NOTCH1 promotes NOTCH1 activation through the released notch intracellular domain (NICD) and subsequent translocation to the nucleus. Interaction with TNR induces a repulsion of neurons and an inhibition of neurite outgrowth. The sequence is that of Contactin-1 (Cntn1) from Mus musculus (Mouse).